The chain runs to 214 residues: dITP/XTP pyrophosphatase (214 aa).

Residue 16–21 (THNPGK) coordinates substrate. 2 residues coordinate Mg(2+): aspartate 48 and aspartate 77. Aspartate 77 serves as the catalytic Proton acceptor. Residues serine 78, 163–166 (FGYD), lysine 186, and 198–199 (HR) each bind substrate.

Belongs to the HAM1 NTPase family. Homodimer. The cofactor is Mg(2+).

The enzyme catalyses XTP + H2O = XMP + diphosphate + H(+). It catalyses the reaction dITP + H2O = dIMP + diphosphate + H(+). The catalysed reaction is ITP + H2O = IMP + diphosphate + H(+). In terms of biological role, pyrophosphatase that catalyzes the hydrolysis of nucleoside triphosphates to their monophosphate derivatives, with a high preference for the non-canonical purine nucleotides XTP (xanthosine triphosphate), dITP (deoxyinosine triphosphate) and ITP. Seems to function as a house-cleaning enzyme that removes non-canonical purine nucleotides from the nucleotide pool, thus preventing their incorporation into DNA/RNA and avoiding chromosomal lesions. The polypeptide is dITP/XTP pyrophosphatase (Bradyrhizobium sp. (strain BTAi1 / ATCC BAA-1182)).